We begin with the raw amino-acid sequence, 161 residues long: Nucleotide-binding protein mma_0840 (161 aa).

The protein belongs to the YajQ family.

Functionally, nucleotide-binding protein. The protein is Nucleotide-binding protein mma_0840 of Janthinobacterium sp. (strain Marseille) (Minibacterium massiliensis).